The following is a 450-amino-acid chain: Probable glucan endo-1,3-beta-glucosidase eglC (450 aa).

Positions 1–18 (MQFTHLVALALALATSEA) are cleaved as a signal peptide. Glu-128 acts as the Proton donor in catalysis. A glycan (N-linked (GlcNAc...) asparagine) is linked at Asn-183. Catalysis depends on Glu-239, which acts as the Nucleophile. N-linked (GlcNAc...) asparagine glycosylation is found at Asn-362 and Asn-368. 2 stretches are compositionally biased toward low complexity: residues 377 to 395 (SSAI…SGSS) and 405 to 420 (ASGQ…SAPS). The interval 377 to 420 (SSAISGSSSGSAAGSSGSSGSSGSGASGASGQSSSSTGSSSAPS) is disordered. Asn-427 carries the GPI-anchor amidated asparagine lipid modification. A propeptide spans 428 to 450 (AASGLSGSICGAVVAVCLALAAL) (removed in mature form).

Belongs to the glycosyl hydrolase 17 family. Post-translationally, the GPI-anchor is attached to the protein in the endoplasmic reticulum and serves to target the protein to the cell surface. There, the glucosamine-inositol phospholipid moiety is cleaved off and the GPI-modified mannoprotein is covalently attached via its lipidless GPI glycan remnant to the 1,6-beta-glucan of the outer cell wall layer.

It localises to the cell membrane. Its subcellular location is the secreted. The protein localises to the cell wall. The catalysed reaction is Hydrolysis of (1-&gt;3)-beta-D-glucosidic linkages in (1-&gt;3)-beta-D-glucans.. Its function is as follows. Glucanases play a role in cell expansion during growth, in cell-cell fusion during mating, and in spore release during sporulation. This enzyme may be involved in beta-glucan degradation and also function biosynthetically as a transglycosylase. This Aspergillus fumigatus (strain CBS 144.89 / FGSC A1163 / CEA10) (Neosartorya fumigata) protein is Probable glucan endo-1,3-beta-glucosidase eglC (eglC).